A 1028-amino-acid polypeptide reads, in one-letter code: Collagen alpha-1(VI) chain (1028 aa).

The N-terminal stretch at 1-19 is a signal peptide; sequence MRAARALLPLLLQACWTAA. Positions 20–256 are N-terminal globular domain; it reads QDEPETPRAV…CCSFECQPAR (237 aa). A VWFA 1 domain is found at 37-235; that stretch reads DLFFVLDTSE…EAISQTIDTI (199 aa). Asn212 is a glycosylation site (N-linked (GlcNAc...) asparagine). The segment at 254–590 is disordered; sequence PARGPPGLRG…GPPGHQGPPG (337 aa). A triple-helical region region spans residues 257–592; the sequence is GPPGLRGDPG…PGHQGPPGPD (336 aa). The Cell attachment site motif lies at 262–264; it reads RGD. Basic and acidic residues-rich tracts occupy residues 268-285 and 301-334; these read EGER…EAGD and KGEK…DGVK. A compositionally biased stretch (low complexity) spans 384–394; it reads RPGSSGPSGDE. A Cell attachment site motif is present at residues 442 to 444; the sequence is RGD. The span at 457 to 471 shows a compositional bias: low complexity; sequence EGPVGVPGDPGEAGP. The short motif at 478-480 is the Cell attachment site element; it reads RGD. Positions 483–493 are enriched in low complexity; that stretch reads PPGSEGARGAP. Asn516 and Asn537 each carry an N-linked (GlcNAc...) asparagine glycan. The segment covering 550-560 has biased composition (acidic residues); sequence GEAGDPGDDNN. Residues 579–590 show a composition bias toward pro residues; the sequence is PQGPPGHQGPPG. The tract at residues 593 to 1028 is C-terminal globular domain; it reads ECEILDIIMK…QTVSRKVALG (436 aa). VWFA domains follow at residues 615–805 and 829–1021; these read DLLF…LKNV and DITI…HQTV. 2 N-linked (GlcNAc...) asparagine glycosylation sites follow: Asn804 and Asn896.

The protein belongs to the type VI collagen family. In terms of assembly, trimers composed of three different chains: alpha-1(VI), alpha-2(VI), and alpha-3(VI) or alpha-5(VI) or alpha-6(VI). Prolines at the third position of the tripeptide repeating unit (G-X-Y) are hydroxylated in some or all of the chains.

Its subcellular location is the secreted. The protein localises to the extracellular space. It localises to the extracellular matrix. In terms of biological role, collagen VI acts as a cell-binding protein. The chain is Collagen alpha-1(VI) chain (COL6A1) from Homo sapiens (Human).